Consider the following 1233-residue polypeptide: STE20-like serine/threonine-protein kinase (1233 aa).

Serine 14 is subject to Phosphoserine. One can recognise a Protein kinase domain in the interval tryptophan 34–valine 292. ATP contacts are provided by residues leucine 40–valine 48 and lysine 63. Aspartate 155 functions as the Proton acceptor in the catalytic mechanism. Threonine 183 carries the phosphothreonine modification. Phosphoserine is present on serine 189. The segment at alanine 309 to aspartate 351 is disordered. The span at threonine 312–glutamate 328 shows a compositional bias: acidic residues. A phosphoserine mark is found at serine 340, serine 341, serine 344, serine 347, serine 348, serine 354, and serine 372. Positions valine 363–serine 399 are enriched in basic and acidic residues. Disordered regions lie at residues valine 363 to arginine 453, valine 498 to glutamate 650, alanine 663 to leucine 761, and alanine 772 to lysine 791. Residues proline 432 to aspartate 441 are compositionally biased toward polar residues. Over residues leucine 518–lysine 529 the composition is skewed to basic and acidic residues. A phosphoserine mark is found at serine 543, serine 561, and serine 566. A compositionally biased stretch (basic and acidic residues) spans glycine 598–proline 607. The segment covering glutamine 619–threonine 630 has biased composition (polar residues). Phosphoserine occurs at positions 643, 647, and 666. The span at alanine 690 to serine 701 shows a compositional bias: low complexity. Residues threonine 746 to leucine 761 are compositionally biased toward polar residues. Phosphoserine occurs at positions 775 and 777. Phosphothreonine is present on threonine 812. Serine 816 bears the Phosphoserine mark. Positions leucine 824–alanine 1067 form a coiled coil. In terms of domain architecture, UVR spans aspartate 873–glutamate 908. The segment at lysine 944–glutamine 963 is disordered. A compositionally biased stretch (low complexity) spans glutamine 954–glutamine 963. The residue at position 1095 (threonine 1095) is a Phosphothreonine. A coiled-coil region spans residues alanine 1107–arginine 1181. Residues glutamine 1109 to methionine 1129 are disordered.

This sequence belongs to the protein kinase superfamily. STE Ser/Thr protein kinase family. STE20 subfamily. Proteolytically cleaved by caspase-3. Post-translationally, autophosphorylated. Ubiquitously expressed.

The protein resides in the cytoplasm. The enzyme catalyses L-seryl-[protein] + ATP = O-phospho-L-seryl-[protein] + ADP + H(+). It carries out the reaction L-threonyl-[protein] + ATP = O-phospho-L-threonyl-[protein] + ADP + H(+). Mediates apoptosis and actin stress fiber dissolution. This is STE20-like serine/threonine-protein kinase (Slk) from Mus musculus (Mouse).